A 372-amino-acid polypeptide reads, in one-letter code: D-alanine--D-alanine ligase (372 aa).

The 205-residue stretch at 145 to 349 folds into the ATP-grasp domain; that stretch reads KTVLRAGGIP…CPNLLDQLIE (205 aa). Residue 176–231 coordinates ATP; sequence DRWGTSELFVKAVSLGSSVATLPVKTETEFTKAVKEVFRYDDRLMVEPRIRGREIE. 3 residues coordinate Mg(2+): Asp-303, Glu-316, and Asn-318.

This sequence belongs to the D-alanine--D-alanine ligase family. Requires Mg(2+) as cofactor. Mn(2+) serves as cofactor.

It is found in the cytoplasm. It catalyses the reaction 2 D-alanine + ATP = D-alanyl-D-alanine + ADP + phosphate + H(+). Its pathway is cell wall biogenesis; peptidoglycan biosynthesis. Its function is as follows. Cell wall formation. The chain is D-alanine--D-alanine ligase from Coxiella burnetii (strain RSA 331 / Henzerling II).